A 61-amino-acid polypeptide reads, in one-letter code: Temporin-1Tb (61 aa).

The first 22 residues, Met-1 to Cys-22, serve as a signal peptide directing secretion. Positions Glu-23–Glu-44 are excised as a propeptide. Leu-59 carries the post-translational modification Leucine amide.

The protein belongs to the frog skin active peptide (FSAP) family. Temporin subfamily. As to quaternary structure, homo-oligomerizes in membranes as homodimers, homotrimers, or even homotetramers. Oligomerizes in presence of LPS. In Gram-positive bacterial mimetic membranes, the aggregation is weakly pronounced, and penetration proceeds more rapidly and is deeper than in Gram-negative bacterial mimetic membranes where aggregation is high. Homo-oligomerization is prevented by temporin-L. Expressed by the skin glands.

It localises to the secreted. Its subcellular location is the target cell membrane. The protein resides in the target cell. It is found in the target cell cytoplasm. Functionally, amphipathic alpha-helical antimicrobial peptide with potent activity against Gram-positive bacteria, weak activity against Gram-negative bacteria, and moderate activity against fungi. Mainly acts by causing membrane permeabilization, but is unable to forme pore-like openings. Is also able to penetrate eukaryotic cells (keratinocytes), and kill intracellular S.aureus (both wild-type and MRSA) without injuring host cells. Shows inhibitory effect on biofilm formation of Gram-positive bacteria, but not of Gram-negative bacteria. Shows antiviral activity against herpes simplex virus 1 (HSV-1) by disrupting the viral envelope. Also displays anti-leishmania activity by damaging parasite membrane. Does not show hemolytic activity. Acts synergistically with temporin-L that improves temporin-1Tb activity by preventing its self-association in lipopolysaccharides (LPS). In vitro, promotes cell migration and wound healing. The sequence is that of Temporin-1Tb from Rana temporaria (European common frog).